The chain runs to 394 residues: Elongation factor Tu (394 aa).

Positions 10 to 204 (KPHVNVGTIG…ALDRYIPTPE (195 aa)) constitute a tr-type G domain. The segment at 19–26 (GHVDHGKT) is G1. 19-26 (GHVDHGKT) contributes to the GTP binding site. Thr-26 contributes to the Mg(2+) binding site. A G2 region spans residues 60-64 (GITIN). Positions 81 to 84 (DCPG) are G3. GTP is bound by residues 81–85 (DCPGH) and 136–139 (NKCD). Residues 136 to 139 (NKCD) are G4. The tract at residues 174–176 (SAL) is G5.

Belongs to the TRAFAC class translation factor GTPase superfamily. Classic translation factor GTPase family. EF-Tu/EF-1A subfamily. Monomer.

The protein resides in the cytoplasm. The catalysed reaction is GTP + H2O = GDP + phosphate + H(+). GTP hydrolase that promotes the GTP-dependent binding of aminoacyl-tRNA to the A-site of ribosomes during protein biosynthesis. The chain is Elongation factor Tu from Neisseria gonorrhoeae.